Consider the following 514-residue polypeptide: Putative thymidine phosphorylase (514 aa).

Belongs to the thymidine/pyrimidine-nucleoside phosphorylase family. Type 2 subfamily.

It catalyses the reaction thymidine + phosphate = 2-deoxy-alpha-D-ribose 1-phosphate + thymine. The polypeptide is Putative thymidine phosphorylase (Sphingopyxis alaskensis (strain DSM 13593 / LMG 18877 / RB2256) (Sphingomonas alaskensis)).